The sequence spans 22 residues: Defensin D1 (22 aa).

The protein belongs to the DEFL family. Group II subfamily.

Its function is as follows. Antimicrobial peptide. Active against Gram-positive and Gram-negative bacterial pathogens. In Spinacia oleracea (Spinach), this protein is Defensin D1.